A 460-amino-acid chain; its full sequence is Phosphoglucosamine mutase (460 aa).

Ser-102 acts as the Phosphoserine intermediate in catalysis. Mg(2+) is bound by residues Ser-102, Asp-241, Asp-243, and Asp-245. Ser-102 is subject to Phosphoserine.

The protein belongs to the phosphohexose mutase family. It depends on Mg(2+) as a cofactor. In terms of processing, activated by phosphorylation.

The enzyme catalyses alpha-D-glucosamine 1-phosphate = D-glucosamine 6-phosphate. Its function is as follows. Catalyzes the conversion of glucosamine-6-phosphate to glucosamine-1-phosphate. The chain is Phosphoglucosamine mutase from Verminephrobacter eiseniae (strain EF01-2).